Here is a 75-residue protein sequence, read N- to C-terminus: Ferredoxin-thioredoxin reductase, variable chain (75 aa).

The interaction with ferredoxin stretch occupies residues 43–46; sequence QGRP.

Belongs to the ferredoxin thioredoxin reductase alpha subunit family. As to quaternary structure, heterodimer of subunit A (variable subunit) and subunit B (catalytic subunit). Heterodimeric FTR forms a complex with ferredoxin and thioredoxin.

Functionally, variable subunit of the ferredoxin-thioredoxin reductase (FTR), which catalyzes the two-electron reduction of thioredoxins by the electrons provided by reduced ferredoxin. The protein is Ferredoxin-thioredoxin reductase, variable chain (ftrV) of Synechocystis sp. (strain ATCC 27184 / PCC 6803 / Kazusa).